A 95-amino-acid polypeptide reads, in one-letter code: Aspartyl/glutamyl-tRNA(Asn/Gln) amidotransferase subunit C (95 aa).

The protein belongs to the GatC family. Heterotrimer of A, B and C subunits.

It catalyses the reaction L-glutamyl-tRNA(Gln) + L-glutamine + ATP + H2O = L-glutaminyl-tRNA(Gln) + L-glutamate + ADP + phosphate + H(+). The enzyme catalyses L-aspartyl-tRNA(Asn) + L-glutamine + ATP + H2O = L-asparaginyl-tRNA(Asn) + L-glutamate + ADP + phosphate + 2 H(+). Its function is as follows. Allows the formation of correctly charged Asn-tRNA(Asn) or Gln-tRNA(Gln) through the transamidation of misacylated Asp-tRNA(Asn) or Glu-tRNA(Gln) in organisms which lack either or both of asparaginyl-tRNA or glutaminyl-tRNA synthetases. The reaction takes place in the presence of glutamine and ATP through an activated phospho-Asp-tRNA(Asn) or phospho-Glu-tRNA(Gln). This chain is Aspartyl/glutamyl-tRNA(Asn/Gln) amidotransferase subunit C, found in Halothermothrix orenii (strain H 168 / OCM 544 / DSM 9562).